Reading from the N-terminus, the 450-residue chain is F-box/FBD/LRR-repeat protein At5g22660 (450 aa).

Positions 12 to 58 (EDRISSLPDHLLSQILSNLPTENAVTTSILSTRWKDLWLSTPVLDID) constitute an F-box domain. LRR repeat units lie at residues 157 to 181 (LPNL…KFIS) and 294 to 317 (LSSL…LKHE). Positions 364–416 (EEISLSSSVPKCLQSSLENVEIIRPNYGSGEEMKLSKYFLENSLVLKKFKLCR) constitute an FBD domain.

The protein is F-box/FBD/LRR-repeat protein At5g22660 of Arabidopsis thaliana (Mouse-ear cress).